The following is a 597-amino-acid chain: MTDHTNADTLRTPIVAVLGHVDHGKTSLLDTIRGSAVSEGEAGAITQHIGATDIPLDTISEMAGELIDPTDFDLPGLLFIDTPGHHSFSTLRARGGALADIAVLVVDVNDGFQPQTEEAIDILRRTGTPFVVAANKVDTTPGWNPQDGQPIQRSLEAQSERAESMLNENLYEIIGQLSDAGFSADLYWRVQDFQKNIGVVPLSAITGEGVPDLLTVLMGLSQRFMKEEMAIDVQGPGEGTVLEVKDERGFGATIDTVVYDGVVRNGDQIVVGGQDEPIVTEIRALLQPRPLEEIRTEKKFEKVAEVGAAAGVKIAAPDLDRAMAGAPVRVVRDRPVEEVVEEVKAELAEIEVETAENGVVVKADTLGSLEAMANALREAEVPILRAEVGDIAPRDIAVAETANQDEHKAILGFNVDLLANAETELENADVKLFTDEVIYQLIEDYETYVEEKQRAQQETVLDKVVRPSRFRILPDHTFRQNDPAVVGVEVISGTVQNNRNVGYFEGNEFERVGQLSGIQKQGDDVDEARAGERVSIAIDGPTVGRDIEEGDTLWTEIPEKHAKILEQELKEEITADEREALAAYLETKRKRDPFWGK.

The tr-type G domain occupies Leu10–Lys226. The tract at residues Gly19 to Thr26 is G1. GTP is bound at residue Gly19–Thr26. The G2 stretch occupies residues Ala44–His48. The tract at residues Asp81–Gly84 is G3. GTP-binding positions include Asp81–His85 and Asn135–Asp138. The tract at residues Asn135–Asp138 is G4. Residues Ser203 to Ile205 form a G5 region.

The protein belongs to the TRAFAC class translation factor GTPase superfamily. Classic translation factor GTPase family. IF-2 subfamily.

In terms of biological role, function in general translation initiation by promoting the binding of the formylmethionine-tRNA to ribosomes. Seems to function along with eIF-2. The protein is Probable translation initiation factor IF-2 of Halorubrum lacusprofundi (strain ATCC 49239 / DSM 5036 / JCM 8891 / ACAM 34).